Reading from the N-terminus, the 123-residue chain is Small ribosomal subunit protein uS12 (123 aa).

Aspartate 89 is modified (3-methylthioaspartic acid). Positions 104 to 123 (TAGVKDRKQARSKYGAKRPK) are disordered. Positions 113 to 123 (ARSKYGAKRPK) are enriched in basic residues.

This sequence belongs to the universal ribosomal protein uS12 family. As to quaternary structure, part of the 30S ribosomal subunit. Contacts proteins S8 and S17. May interact with IF1 in the 30S initiation complex.

In terms of biological role, with S4 and S5 plays an important role in translational accuracy. Interacts with and stabilizes bases of the 16S rRNA that are involved in tRNA selection in the A site and with the mRNA backbone. Located at the interface of the 30S and 50S subunits, it traverses the body of the 30S subunit contacting proteins on the other side and probably holding the rRNA structure together. The combined cluster of proteins S8, S12 and S17 appears to hold together the shoulder and platform of the 30S subunit. The polypeptide is Small ribosomal subunit protein uS12 (Chromobacterium violaceum (strain ATCC 12472 / DSM 30191 / JCM 1249 / CCUG 213 / NBRC 12614 / NCIMB 9131 / NCTC 9757 / MK)).